The following is a 488-amino-acid chain: Cobyric acid synthase (488 aa).

The 189-residue stretch at 252–440 folds into the GATase cobBQ-type domain; it reads VPLIAVLRFP…VHGLFANDRQ (189 aa). C334 acts as the Nucleophile in catalysis. The active site involves H432.

Belongs to the CobB/CobQ family. CobQ subfamily.

It functions in the pathway cofactor biosynthesis; adenosylcobalamin biosynthesis. Its function is as follows. Catalyzes amidations at positions B, D, E, and G on adenosylcobyrinic A,C-diamide. NH(2) groups are provided by glutamine, and one molecule of ATP is hydrogenolyzed for each amidation. In Methylorubrum populi (strain ATCC BAA-705 / NCIMB 13946 / BJ001) (Methylobacterium populi), this protein is Cobyric acid synthase.